The sequence spans 486 residues: ATP synthase subunit beta (486 aa).

170 to 177 (GGAGVGKT) serves as a coordination point for ATP.

It belongs to the ATPase alpha/beta chains family. F-type ATPases have 2 components, CF(1) - the catalytic core - and CF(0) - the membrane proton channel. CF(1) has five subunits: alpha(3), beta(3), gamma(1), delta(1), epsilon(1). CF(0) has three main subunits: a(1), b(2) and c(9-12). The alpha and beta chains form an alternating ring which encloses part of the gamma chain. CF(1) is attached to CF(0) by a central stalk formed by the gamma and epsilon chains, while a peripheral stalk is formed by the delta and b chains.

The protein localises to the cell membrane. It carries out the reaction ATP + H2O + 4 H(+)(in) = ADP + phosphate + 5 H(+)(out). Its function is as follows. Produces ATP from ADP in the presence of a proton gradient across the membrane. The catalytic sites are hosted primarily by the beta subunits. This is ATP synthase subunit beta from Kineococcus radiotolerans (strain ATCC BAA-149 / DSM 14245 / SRS30216).